A 601-amino-acid chain; its full sequence is Elongation factor 4 (601 aa).

One can recognise a tr-type G domain in the interval 7 to 189 (RNIRNFSIIA…AIVHRIPPPK (183 aa)). Residues 19 to 24 (DHGKST) and 136 to 139 (NKID) contribute to the GTP site.

This sequence belongs to the TRAFAC class translation factor GTPase superfamily. Classic translation factor GTPase family. LepA subfamily.

It is found in the cell inner membrane. It carries out the reaction GTP + H2O = GDP + phosphate + H(+). In terms of biological role, required for accurate and efficient protein synthesis under certain stress conditions. May act as a fidelity factor of the translation reaction, by catalyzing a one-codon backward translocation of tRNAs on improperly translocated ribosomes. Back-translocation proceeds from a post-translocation (POST) complex to a pre-translocation (PRE) complex, thus giving elongation factor G a second chance to translocate the tRNAs correctly. Binds to ribosomes in a GTP-dependent manner. The protein is Elongation factor 4 of Xanthomonas campestris pv. campestris (strain ATCC 33913 / DSM 3586 / NCPPB 528 / LMG 568 / P 25).